The sequence spans 786 residues: MRRSLAPSQRLGVRIKSKDAFTPPLLKKNKRACQQELEKRQSALRDATNIVELPLPIRFTANSEYEQAIAKVLARKFKVPIANYVPDYGGNRSLGVRRSIVRRALHDPLACNALVLFTPPVYTEHERMSLDPSKLQVHVVVDPLLSNVLRPHQREGVRFMYECVEGKRGSFNGCIMADEMGLGKTLQCVTLTWTLLRQSADCKPTISKAIVVSPSSLVKNWEKEFTKWLHGRMHCLAMEGGSKEETTRTLEQFAMNTSTRCGTPVLLISYETFRLYAHILCKTEVGMVICDEGHRLKNSDNLTYQALMGLKTKRRVLLSGTPIQNDLTEYFSLVNFVNPEMLGTATDFKRNFENAILRGQNADSTDTERERALLKTQELIGLVNQCIIRRTNQILTKYLPVKFEMVVCAKLTAVQLQIYTNFLKSDQVCRSLADCNEKTSLTALSDITTLKKLCNHPDLIYEKLAAREKGFENSQNVLPANYKPKDINPELSGKFMLLDFMLAAIRANSDDKVVLISNYTQTLDLFEQLARKRKYSYVRLDGTMTIKKRSKVVDRFNDPSSDCFLFMLSSKAGGCGLNLIGANRLFMFDPDWNPANDEQAMARVWRDGQKKPCYIYRLVASGSIEEKILQRQTHKKSLSSTIIDNNESVEKHFTRDDLKDLFSFEANVLSDTHNKLKCKRCFQDVQRQPPADNTDCTSHLSQWFHCSNNRGLPDTILSQAWTASKCVSFVFHHRSQAEAKPAATTTDEDEELSDSKRKAKKTLASDDDDDEDFVLNCSSGEEFSGF.

The tract at residues 2-9 (RRSLAPSQ) is required for chromatin remodeling, strand pairing activities and coupling of ATPase activity. At Thr22 the chain carries Phosphothreonine. The 176-residue stretch at 165-340 (EGKRGSFNGC…FSLVNFVNPE (176 aa)) folds into the Helicase ATP-binding domain. 178–185 (DEMGLGKT) contacts ATP. Residues 291–294 (DEGH) carry the DEGH box motif. One can recognise a Helicase C-terminal domain in the interval 497–654 (LLDFMLAAIR…NNESVEKHFT (158 aa)). Positions 738–786 (EAKPAATTTDEDEELSDSKRKAKKTLASDDDDDEDFVLNCSSGEEFSGF) are disordered. Over residues 776–786 (NCSSGEEFSGF) the composition is skewed to polar residues.

Belongs to the SNF2/RAD54 helicase family. In terms of assembly, interacts (via N-terminus) with spn-A/Rad51.

Its subcellular location is the nucleus. Functionally, involved in mitotic DNA repair and meiotic recombination. Functions in the recombinational DNA repair pathway. Essential for interhomolog gene conversion (GC), but may have a less important role in intersister GC than spn-A/Rad51. In the presence of DNA, spn-A/Rad51 enhances the ATPase activity of okr/Rad54. This is DNA repair and recombination protein RAD54-like from Drosophila grimshawi (Hawaiian fruit fly).